The following is a 465-amino-acid chain: Ribulose bisphosphate carboxylase large chain (465 aa).

Position 4 is an N6,N6,N6-trimethyllysine (Lys-4). The substrate site is built by Asn-113 and Thr-163. Lys-165 acts as the Proton acceptor in catalysis. A substrate-binding site is contributed by Lys-167. Positions 191, 193, and 194 each coordinate Mg(2+). N6-carboxylysine is present on Lys-191. The active-site Proton acceptor is the His-284. Substrate-binding residues include Arg-285, His-317, and Ser-369.

This sequence belongs to the RuBisCO large chain family. Type I subfamily. As to quaternary structure, heterohexadecamer of 8 large chains and 8 small chains; disulfide-linked. The disulfide link is formed within the large subunit homodimers. Mg(2+) serves as cofactor. The disulfide bond which can form in the large chain dimeric partners within the hexadecamer appears to be associated with oxidative stress and protein turnover.

The protein resides in the plastid. It is found in the chloroplast. The catalysed reaction is 2 (2R)-3-phosphoglycerate + 2 H(+) = D-ribulose 1,5-bisphosphate + CO2 + H2O. The enzyme catalyses D-ribulose 1,5-bisphosphate + O2 = 2-phosphoglycolate + (2R)-3-phosphoglycerate + 2 H(+). RuBisCO catalyzes two reactions: the carboxylation of D-ribulose 1,5-bisphosphate, the primary event in carbon dioxide fixation, as well as the oxidative fragmentation of the pentose substrate in the photorespiration process. Both reactions occur simultaneously and in competition at the same active site. This Ilex crenata (Japanese holly) protein is Ribulose bisphosphate carboxylase large chain.